The following is a 127-amino-acid chain: Holo-[acyl-carrier-protein] synthase (127 aa).

Residues D8 and E56 each contribute to the Mg(2+) site.

The protein belongs to the P-Pant transferase superfamily. AcpS family. The cofactor is Mg(2+).

It localises to the cytoplasm. It catalyses the reaction apo-[ACP] + CoA = holo-[ACP] + adenosine 3',5'-bisphosphate + H(+). Functionally, transfers the 4'-phosphopantetheine moiety from coenzyme A to a Ser of acyl-carrier-protein. This is Holo-[acyl-carrier-protein] synthase from Deinococcus deserti (strain DSM 17065 / CIP 109153 / LMG 22923 / VCD115).